The primary structure comprises 296 residues: Probable ribosomal RNA small subunit methyltransferase A (296 aa).

Polar residues predominate over residues 1-16 (MTDATSGSDPDSTTPV). The interval 1 to 25 (MTDATSGSDPDSTTPVDLTGEDFRD) is disordered. 6 residues coordinate S-adenosyl-L-methionine: His-44, Leu-46, Gly-72, Glu-93, Asp-121, and Asn-136.

It belongs to the class I-like SAM-binding methyltransferase superfamily. rRNA adenine N(6)-methyltransferase family. RsmA subfamily.

The protein localises to the cytoplasm. Specifically dimethylates two adjacent adenosines in the loop of a conserved hairpin near the 3'-end of 16S rRNA in the 30S particle. May play a critical role in biogenesis of 30S subunits. The sequence is that of Probable ribosomal RNA small subunit methyltransferase A from Haloquadratum walsbyi (strain DSM 16790 / HBSQ001).